The following is a 212-amino-acid chain: Thymidylate kinase (212 aa).

11–18 contributes to the ATP binding site; sequence GGEGVGKS.

Belongs to the thymidylate kinase family.

The enzyme catalyses dTMP + ATP = dTDP + ADP. Functionally, phosphorylation of dTMP to form dTDP in both de novo and salvage pathways of dTTP synthesis. The protein is Thymidylate kinase of Chromohalobacter salexigens (strain ATCC BAA-138 / DSM 3043 / CIP 106854 / NCIMB 13768 / 1H11).